A 219-amino-acid polypeptide reads, in one-letter code: Flagellar transcriptional regulator FlhC (219 aa).

Zn(2+)-binding residues include C137, C140, C157, and C160.

It belongs to the FlhC family. Heterohexamer composed of two FlhC and four FlhD subunits. Each FlhC binds a FlhD dimer, forming a heterotrimer, and a hexamer assembles by dimerization of two heterotrimers. Zn(2+) serves as cofactor.

It localises to the cytoplasm. In terms of biological role, functions in complex with FlhD as a master transcriptional regulator that regulates transcription of several flagellar and non-flagellar operons by binding to their promoter region. Activates expression of class 2 flagellar genes, including fliA, which is a flagellum-specific sigma factor that turns on the class 3 genes. Also regulates genes whose products function in a variety of physiological pathways. The polypeptide is Flagellar transcriptional regulator FlhC (Paraburkholderia phymatum (strain DSM 17167 / CIP 108236 / LMG 21445 / STM815) (Burkholderia phymatum)).